The chain runs to 421 residues: MDMFSLGQGNNTTTSLEPFGTGGNDTGLSNVTFSYQVITSLLLGTLIFCAVLGNACVVAAIALERSLQNVANYLIGSLAVTDLMVSVLVLPMAALYQVLNKWTLGQVTCDLFIALDVLCCTSSILHLCAIALDRYWAITDPIDYVNKRTPRRAAALISLTWLIGFLISIPPMLGWRTPEDRSNPNECTISKDHGYTIYSTFGAFYIPLLLMLVLYGRIFRAARFRIRKTVKKVEKKGAGTSFGTSSAPPPKKSLNGQPGSGDCRRSAENRAVGTPCANGAVRQGEDDATLEVIEVHRVGNSKGHLPLPSESGATSYVPACLERKNERTAEAKRKMALARERKTVKTLGIIMGTFILCWLPFFIVALVLPFCESSCHMPELLGAIINWLGYSNSLLNPVIYAYFNKDFQNAFKKIIKCKFCR.

The Extracellular portion of the chain corresponds to 1-38; it reads MDMFSLGQGNNTTTSLEPFGTGGNDTGLSNVTFSYQVI. 4 N-linked (GlcNAc...) asparagine glycosylation sites follow: Asn10, Asn11, Asn24, and Asn30. The helical transmembrane segment at 39–59 threads the bilayer; sequence TSLLLGTLIFCAVLGNACVVA. Residues 60 to 73 are Cytoplasmic-facing; sequence AIALERSLQNVANY. The chain crosses the membrane as a helical span at residues 74-98; it reads LIGSLAVTDLMVSVLVLPMAALYQV. Residues 99–107 lie on the Extracellular side of the membrane; it reads LNKWTLGQV. A helical transmembrane segment spans residues 108-132; the sequence is TCDLFIALDVLCCTSSILHLCAIAL. A disulfide bridge connects residues Cys109 and Cys187. The serotonin site is built by Asp116 and Cys120. Residues 133–135 carry the DRY motif; important for ligand-induced conformation changes motif; the sequence is DRY. The Cytoplasmic portion of the chain corresponds to 133–152; the sequence is DRYWAITDPIDYVNKRTPRR. Residues 153–174 traverse the membrane as a helical segment; it reads AAALISLTWLIGFLISIPPMLG. The Extracellular segment spans residues 175–193; the sequence is WRTPEDRSNPNECTISKDH. Residues 194–216 form a helical membrane-spanning segment; that stretch reads GYTIYSTFGAFYIPLLLMLVLYG. The Cytoplasmic portion of the chain corresponds to 217-346; it reads RIFRAARFRI…LARERKTVKT (130 aa). The segment at 237–268 is disordered; that stretch reads GAGTSFGTSSAPPPKKSLNGQPGSGDCRRSAE. Thr314, Lys345, Thr346, and Gly352 together coordinate 1D-myo-inositol 4-phosphate. A helical membrane pass occupies residues 347–370; the sequence is LGIIMGTFILCWLPFFIVALVLPF. Residues 371-378 are Extracellular-facing; sequence CESSCHMP. The chain crosses the membrane as a helical span at residues 379–403; the sequence is ELLGAIINWLGYSNSLLNPVIYAYF. The short motif at 396-400 is the NPxxY motif; important for ligand-induced conformation changes and signaling element; sequence NPVIY. Residues Phe403, Asn404, and Lys405 each coordinate 1D-myo-inositol 4-phosphate. Residues 404–421 are Cytoplasmic-facing; that stretch reads NKDFQNAFKKIIKCKFCR.

This sequence belongs to the G-protein coupled receptor 1 family. 5-hydroxytryptamine receptor subfamily. HTR1A sub-subfamily. In terms of assembly, heterodimer; heterodimerizes with GPER1. Interacts with YIF1B. Interacts with GPR39 and GALR1. In terms of tissue distribution, most abundantly expressed in midbrain, in dorsal raphe and hippocampus. Detected at lower levels in amygdala and brain cortex.

The protein resides in the cell membrane. Its subcellular location is the cell projection. It localises to the dendrite. With respect to regulation, G-protein coupled receptor activity is regulated by lipids: phosphatidylinositol 4-phosphate increases HTR1A-mediated activity. Plays a role in the regulation of dopamine and 5-hydroxytryptamine levels in the brain, and thereby affects neural activity, mood and behavior. Plays a role in the response to anxiogenic stimuli. Functionally, G-protein coupled receptor for 5-hydroxytryptamine (serotonin). Also functions as a receptor for various drugs and psychoactive substances. Ligand binding causes a conformation change that triggers signaling via guanine nucleotide-binding proteins (G proteins) and modulates the activity of downstream effectors, such as adenylate cyclase. HTR1A is coupled to G(i)/G(o) G alpha proteins and mediates inhibitory neurotransmission: signaling inhibits adenylate cyclase activity and activates a phosphatidylinositol-calcium second messenger system that regulates the release of Ca(2+) ions from intracellular stores. Beta-arrestin family members regulate signaling by mediating both receptor desensitization and resensitization processes. The protein is 5-hydroxytryptamine receptor 1A (Htr1a) of Mus musculus (Mouse).